We begin with the raw amino-acid sequence, 148 residues long: Urease accessory protein UreE (148 aa).

It belongs to the UreE family.

The protein localises to the cytoplasm. Its function is as follows. Involved in urease metallocenter assembly. Binds nickel. Probably functions as a nickel donor during metallocenter assembly. This is Urease accessory protein UreE from Nostoc punctiforme (strain ATCC 29133 / PCC 73102).